The following is a 435-amino-acid chain: BAHD acyltransferase BIA1 (435 aa).

Catalysis depends on proton acceptor residues histidine 151 and aspartate 369.

The protein belongs to the plant acyltransferase family. As to expression, mostly expressed in roots (particularly in the root elongation zone), and, to a lower extent, in seedling, leaves (especially in hydathodes), siliques (e.g. in developing seeds) and flowers.

It is found in the cytoplasm. Monitors brassinosteroids (BR) responses and homeostasis, particularly in the root and hypocotyl in darkness. Promotes flavonoid biosynthesis. The polypeptide is BAHD acyltransferase BIA1 (Arabidopsis thaliana (Mouse-ear cress)).